Consider the following 407-residue polypeptide: [Pyruvate dehydrogenase (acetyl-transferring)] kinase isozyme 2, mitochondrial (407 aa).

A Histidine kinase domain is found at Leu135–Ser364. Phosphotyrosine occurs at positions 215 and 216. ATP contacts are provided by residues Glu251–Arg258, Asp290, Ser309–Thr310, and Gly325–Leu330. The residue at position 376 (Lys376) is an N6-succinyllysine.

It belongs to the PDK/BCKDK protein kinase family. As to quaternary structure, homodimer, and heterodimer with PDK1. Interacts with the pyruvate dehydrogenase complex subunit DLAT, and is part of the multimeric pyruvate dehydrogenase complex that contains multiple copies of pyruvate dehydrogenase (E1), dihydrolipoamide acetyltransferase (DLAT, E2) and lipoamide dehydrogenase (DLD, E3). In terms of tissue distribution, detected in heart (at protein level).

The protein localises to the mitochondrion matrix. The enzyme catalyses L-seryl-[pyruvate dehydrogenase E1 alpha subunit] + ATP = O-phospho-L-seryl-[pyruvate dehydrogenase E1 alpha subunit] + ADP + H(+). Functionally, kinase that plays a key role in the regulation of glucose and fatty acid metabolism and homeostasis via phosphorylation of the pyruvate dehydrogenase subunits PDHA1 and PDHA2. This inhibits pyruvate dehydrogenase activity, and thereby regulates metabolite flux through the tricarboxylic acid cycle, down-regulates aerobic respiration and inhibits the formation of acetyl-coenzyme A from pyruvate. Inhibition of pyruvate dehydrogenase decreases glucose utilization and increases fat metabolism. Mediates cellular responses to insulin. Plays an important role in maintaining normal blood glucose levels and in metabolic adaptation to nutrient availability. Via its regulation of pyruvate dehydrogenase activity, plays an important role in maintaining normal blood pH and in preventing the accumulation of ketone bodies under starvation. Plays a role in the regulation of cell proliferation and in resistance to apoptosis under oxidative stress. Plays a role in p53/TP53-mediated apoptosis. The protein is [Pyruvate dehydrogenase (acetyl-transferring)] kinase isozyme 2, mitochondrial (Pdk2) of Mus musculus (Mouse).